A 1993-amino-acid chain; its full sequence is Otoferlin (1993 aa).

The C2 1 domain occupies 1–98 (MALIVHLKTV…VEENRVEVSD (98 aa)). The Cytoplasmic portion of the chain corresponds to 1–1959 (MALIVHLKTV…IKYLICTRYK (1959 aa)). Positions 127–212 (PWDDGDFLGD…KEEPQRQDEP (86 aa)) are disordered. Residues 129–145 (DDGDFLGDESLQEEEKD) are compositionally biased toward acidic residues. Composition is skewed to basic and acidic residues over residues 163–186 (PGEK…EHKA) and 202–211 (HKEEPQRQDE). C2 domains lie at 251 to 372 (KRSK…HKWA) and 415 to 546 (IEGN…FLPT). The tract at residues 654–708 (NYGNEVDGTSRPQRPRPRKEPGDEEEVDLIQNSSDDEGDEAGDLASVSSTPPMRP) is disordered. The segment covering 675-695 (GDEEEVDLIQNSSDDEGDEAG) has biased composition (acidic residues). Residues 807 to 836 (RERLKSCMRELESMGQQAKSLRAQVKRHTV) are a coiled coil. C2 domains are found at residues 959–1084 (LHSF…PPRF) and 1131–1257 (RGPI…ANWN). D991, D997, D1053, D1055, and D1061 together coordinate Ca(2+). Disordered regions lie at residues 1294–1318 (AEDE…EEPD) and 1339–1398 (LRQH…EKKK). The span at 1348 to 1357 (DLEEKEEMDS) shows a compositional bias: acidic residues. A compositionally biased stretch (basic and acidic residues) spans 1366-1379 (KNKEKSRAAKEEKK). C2 domains follow at residues 1460-1589 (LPED…ATCG) and 1710-1861 (DMPA…KQCT). The Ca(2+) site is built by D1504, D1510, D1559, D1561, D1567, D1832, S1835, and D1838. Residues 1960–1980 (WLIIKIVLALLGLLMLALFLY) form a helical membrane-spanning segment. The Extracellular segment spans residues 1981–1993 (SLPGYMVKKLLGA).

The protein belongs to the ferlin family. In terms of assembly, interacts with SNAP25; the interaction is direct. Interacts with STX1; the interaction is direct. Interacts with RAB8B. Requires Ca(2+) as cofactor. Isoform 1 is expressed in the cochlea and brain. Expressed in cerebellum (Purkinje cells), hippocampus (granule cells of the dentate gyrus and in pyramidal cells of the CA1-CA3 region) and cortex (stellate and pyramidal cells). Expressed in hair cells of vestibular organs such as the saccule, utricle and crista ampullari. Expressed in the cochlear inner and outer cells (IHCs and OHCs) (at protein level). Expressed in brain: brainstem, cerebellum (granules cells and Purkinje cell layer), cortex (layers IV and V), inferior colliculus, superior colliculus and hippocampus (granule cells of the dentate gyrus and in pyramidal cells of the CA1-CA3 region).

The protein localises to the cytoplasmic vesicle. Its subcellular location is the secretory vesicle. It is found in the synaptic vesicle membrane. The protein resides in the basolateral cell membrane. It localises to the endoplasmic reticulum membrane. The protein localises to the golgi apparatus membrane. Its subcellular location is the presynaptic cell membrane. It is found in the cell membrane. In terms of biological role, key calcium ion sensor involved in the Ca(2+)-triggered synaptic vesicle-plasma membrane fusion and in the control of neurotransmitter release at these output synapses. Interacts in a calcium-dependent manner to the presynaptic SNARE proteins at ribbon synapses of cochlear inner hair cells (IHCs) to trigger exocytosis of neurotransmitter. Also essential to synaptic exocytosis in immature outer hair cells (OHCs). May also play a role within the recycling of endosomes. The chain is Otoferlin (Otof) from Rattus norvegicus (Rat).